The sequence spans 254 residues: Imidazole glycerol phosphate synthase subunit HisF (254 aa).

Catalysis depends on residues D12 and D132.

Belongs to the HisA/HisF family. In terms of assembly, heterodimer of HisH and HisF.

It is found in the cytoplasm. The enzyme catalyses 5-[(5-phospho-1-deoxy-D-ribulos-1-ylimino)methylamino]-1-(5-phospho-beta-D-ribosyl)imidazole-4-carboxamide + L-glutamine = D-erythro-1-(imidazol-4-yl)glycerol 3-phosphate + 5-amino-1-(5-phospho-beta-D-ribosyl)imidazole-4-carboxamide + L-glutamate + H(+). The protein operates within amino-acid biosynthesis; L-histidine biosynthesis; L-histidine from 5-phospho-alpha-D-ribose 1-diphosphate: step 5/9. Functionally, IGPS catalyzes the conversion of PRFAR and glutamine to IGP, AICAR and glutamate. The HisF subunit catalyzes the cyclization activity that produces IGP and AICAR from PRFAR using the ammonia provided by the HisH subunit. This chain is Imidazole glycerol phosphate synthase subunit HisF, found in Symbiobacterium thermophilum (strain DSM 24528 / JCM 14929 / IAM 14863 / T).